Consider the following 457-residue polypeptide: MQKYFVEARQLLALAIPVIFAQIAQTSMGVVDTVMAGGYSATDMAAVAIGTSIWLPAILFGHGLLLALTPVIAQLNGSGRRDRIAHQVQQGFVLAGLVSVLIMLVLWNAGYIIHAMHNIDPVLANKAVNYLRALLWGAPGYLFFQVMRNQCEGLAKTTPGMAMGFIGLLVNIPVNYIFIYGHFGMPELGGVGCGVATASVYWVMFFCMRFWVKRAGSMRDIRPEPASRRFDWPVIRRLAQIGMPVALALFFEVTLFAVVALLVSPLGIVDVAGHQIALNFSSLMFVLPMSMSAAVTIRVGFRLGQGSTLEAQTSARTGIIVGICLAVLTALFTVVFREPIALLYNDNPEVVTLASHLMLLAAIYQISDSIQVIGSGVLRGYKDTRSIFFITFIAYWVLGLPSGYILGLTDWVVEPMGPAGFWFGFILGLTSAAIMMMWRMRYLQRQPSETILARAAR.

12 consecutive transmembrane segments (helical) span residues 11 to 31, 53 to 73, 93 to 113, 127 to 147, 160 to 180, 188 to 208, 243 to 263, 276 to 296, 316 to 336, 357 to 377, 387 to 407, and 418 to 438; these read LLAL…MGVV, IWLP…PVIA, VLAG…GYII, AVNY…FQVM, GMAM…IFIY, LGGV…FFCM, MPVA…ALLV, IALN…AAVT, RTGI…TVVF, LMLL…GSGV, IFFI…YILG, and PAGF…MMMW.

Belongs to the multi antimicrobial extrusion (MATE) (TC 2.A.66.1) family. MdtK subfamily.

The protein resides in the cell inner membrane. Its function is as follows. Multidrug efflux pump that functions probably as a Na(+)/drug antiporter. In Cronobacter sakazakii (strain ATCC BAA-894) (Enterobacter sakazakii), this protein is Multidrug resistance protein MdtK.